Consider the following 394-residue polypeptide: 1-deoxy-D-xylulose 5-phosphate reductoisomerase (394 aa).

The NADPH site is built by Thr14, Gly15, Ser16, Ile17, Gly40, and Asn128. Lys129 provides a ligand contact to 1-deoxy-D-xylulose 5-phosphate. Position 130 (Glu130) interacts with NADPH. Asp154 provides a ligand contact to Mn(2+). 1-deoxy-D-xylulose 5-phosphate-binding residues include Ser155, Glu156, Ser180, and His203. Glu156 provides a ligand contact to Mn(2+). Gly209 serves as a coordination point for NADPH. Residues Ser216, Asn221, Lys222, and Glu225 each contribute to the 1-deoxy-D-xylulose 5-phosphate site. Glu225 lines the Mn(2+) pocket.

This sequence belongs to the DXR family. It depends on Mg(2+) as a cofactor. Mn(2+) is required as a cofactor.

It catalyses the reaction 2-C-methyl-D-erythritol 4-phosphate + NADP(+) = 1-deoxy-D-xylulose 5-phosphate + NADPH + H(+). It functions in the pathway isoprenoid biosynthesis; isopentenyl diphosphate biosynthesis via DXP pathway; isopentenyl diphosphate from 1-deoxy-D-xylulose 5-phosphate: step 1/6. Functionally, catalyzes the NADPH-dependent rearrangement and reduction of 1-deoxy-D-xylulose-5-phosphate (DXP) to 2-C-methyl-D-erythritol 4-phosphate (MEP). This chain is 1-deoxy-D-xylulose 5-phosphate reductoisomerase, found in Xylella fastidiosa (strain M12).